A 216-amino-acid polypeptide reads, in one-letter code: Thiamine-phosphate synthase (216 aa).

Residues 37-41 (QVRSK) and aspartate 68 contribute to the 4-amino-2-methyl-5-(diphosphooxymethyl)pyrimidine site. Mg(2+) is bound by residues aspartate 69 and aspartate 93. A 4-amino-2-methyl-5-(diphosphooxymethyl)pyrimidine-binding site is contributed by threonine 112. 2-[(2R,5Z)-2-carboxy-4-methylthiazol-5(2H)-ylidene]ethyl phosphate is bound at residue 140-142 (TPT). Lysine 143 contributes to the 4-amino-2-methyl-5-(diphosphooxymethyl)pyrimidine binding site.

Belongs to the thiamine-phosphate synthase family. Mg(2+) serves as cofactor.

It catalyses the reaction 2-[(2R,5Z)-2-carboxy-4-methylthiazol-5(2H)-ylidene]ethyl phosphate + 4-amino-2-methyl-5-(diphosphooxymethyl)pyrimidine + 2 H(+) = thiamine phosphate + CO2 + diphosphate. It carries out the reaction 2-(2-carboxy-4-methylthiazol-5-yl)ethyl phosphate + 4-amino-2-methyl-5-(diphosphooxymethyl)pyrimidine + 2 H(+) = thiamine phosphate + CO2 + diphosphate. The enzyme catalyses 4-methyl-5-(2-phosphooxyethyl)-thiazole + 4-amino-2-methyl-5-(diphosphooxymethyl)pyrimidine + H(+) = thiamine phosphate + diphosphate. Its pathway is cofactor biosynthesis; thiamine diphosphate biosynthesis; thiamine phosphate from 4-amino-2-methyl-5-diphosphomethylpyrimidine and 4-methyl-5-(2-phosphoethyl)-thiazole: step 1/1. Condenses 4-methyl-5-(beta-hydroxyethyl)thiazole monophosphate (THZ-P) and 2-methyl-4-amino-5-hydroxymethyl pyrimidine pyrophosphate (HMP-PP) to form thiamine monophosphate (TMP). In Corynebacterium efficiens (strain DSM 44549 / YS-314 / AJ 12310 / JCM 11189 / NBRC 100395), this protein is Thiamine-phosphate synthase.